Consider the following 98-residue polypeptide: Cystatin-B (98 aa).

At methionine 1 the chain carries N-acetylmethionine. Positions 46–50 match the Secondary area of contact motif; it reads QVVAG.

Belongs to the cystatin family. In terms of assembly, able to form dimers stabilized by noncovalent forces.

It localises to the cytoplasm. Its subcellular location is the nucleus. Functionally, this is an intracellular thiol proteinase inhibitor. Tightly binding reversible inhibitor of cathepsins L, H and B. This chain is Cystatin-B (CSTB), found in Pan troglodytes (Chimpanzee).